Here is a 258-residue protein sequence, read N- to C-terminus: Ciliogenesis and planar polarity effector 2 (258 aa).

Residues 50-258 are small GTPase-like; sequence SIDTASYKIF…LPNPPESAPE (209 aa). Residues serine 64, glycine 65, glycine 67, lysine 68, threonine 69, alanine 70, valine 82, histidine 84, threonine 87, lysine 176, aspartate 178, and serine 206 each coordinate GTP.

This sequence belongs to the small GTPase superfamily. Rab family. In terms of assembly, interacts with FUZ. Associates with the CPLANE (ciliogenesis and planar polarity effectors) complex via its interaction with FUZ.

It localises to the cytoplasm. It is found in the cytoskeleton. Its subcellular location is the cilium basal body. The protein localises to the microtubule organizing center. The protein resides in the centrosome. It localises to the centriole. Functionally, required for efficient primary cilia initiation, regulating a late step in cilia initiation. Plays a role in the final maturation of the mother centriole and ciliary vesicle that allows extension of the ciliary axoneme. This Homo sapiens (Human) protein is Ciliogenesis and planar polarity effector 2.